A 342-amino-acid chain; its full sequence is Methylthioribose-1-phosphate isomerase (342 aa).

Residues 49–51 (RGA), arginine 86, and glutamine 187 each bind substrate. Residue aspartate 228 is the Proton donor of the active site. Residue 238–239 (NK) participates in substrate binding.

It belongs to the eIF-2B alpha/beta/delta subunits family. MtnA subfamily.

The catalysed reaction is 5-(methylsulfanyl)-alpha-D-ribose 1-phosphate = 5-(methylsulfanyl)-D-ribulose 1-phosphate. The protein operates within amino-acid biosynthesis; L-methionine biosynthesis via salvage pathway; L-methionine from S-methyl-5-thio-alpha-D-ribose 1-phosphate: step 1/6. In terms of biological role, catalyzes the interconversion of methylthioribose-1-phosphate (MTR-1-P) into methylthioribulose-1-phosphate (MTRu-1-P). This chain is Methylthioribose-1-phosphate isomerase, found in Serratia proteamaculans (strain 568).